The primary structure comprises 306 residues: Agmatinase (306 aa).

Mn(2+) is bound by residues histidine 126, aspartate 149, histidine 151, aspartate 153, aspartate 230, and aspartate 232.

The protein belongs to the arginase family. Agmatinase subfamily. The cofactor is Mn(2+).

The enzyme catalyses agmatine + H2O = urea + putrescine. The protein operates within amine and polyamine biosynthesis; putrescine biosynthesis via agmatine pathway; putrescine from agmatine: step 1/1. Functionally, catalyzes the formation of putrescine from agmatine. This Citrobacter koseri (strain ATCC BAA-895 / CDC 4225-83 / SGSC4696) protein is Agmatinase.